The primary structure comprises 65 residues: MPKMKTKSSAKKRFKVTGSGKIKRKHAFKSHILTKKSKKRKLALTHSALVHKTDEKSIKQQLRII.

The disordered stretch occupies residues 1–22 (MPKMKTKSSAKKRFKVTGSGKI).

The protein belongs to the bacterial ribosomal protein bL35 family.

The chain is Large ribosomal subunit protein bL35 from Flavobacterium johnsoniae (strain ATCC 17061 / DSM 2064 / JCM 8514 / BCRC 14874 / CCUG 350202 / NBRC 14942 / NCIMB 11054 / UW101) (Cytophaga johnsonae).